Here is a 131-residue protein sequence, read N- to C-terminus: Profilin (131 aa).

This sequence belongs to the profilin family. Occurs in many kinds of cells as a complex with monomeric actin in a 1:1 ratio.

The protein localises to the cytoplasm. It is found in the cytoskeleton. In terms of biological role, binds to actin and affects the structure of the cytoskeleton. At high concentrations, profilin prevents the polymerization of actin, whereas it enhances it at low concentrations. Has a high affinity for poly-proline. This Citrullus lanatus (Watermelon) protein is Profilin.